The primary structure comprises 229 residues: Uracil-DNA glycosylase (229 aa).

Residue D64 is the Proton acceptor of the active site.

This sequence belongs to the uracil-DNA glycosylase (UDG) superfamily. UNG family.

It localises to the cytoplasm. It carries out the reaction Hydrolyzes single-stranded DNA or mismatched double-stranded DNA and polynucleotides, releasing free uracil.. Its function is as follows. Excises uracil residues from the DNA which can arise as a result of misincorporation of dUMP residues by DNA polymerase or due to deamination of cytosine. This is Uracil-DNA glycosylase from Salmonella agona (strain SL483).